A 247-amino-acid polypeptide reads, in one-letter code: 5-oxoprolinase subunit A (247 aa).

It belongs to the LamB/PxpA family. In terms of assembly, forms a complex composed of PxpA, PxpB and PxpC.

It carries out the reaction 5-oxo-L-proline + ATP + 2 H2O = L-glutamate + ADP + phosphate + H(+). Its function is as follows. Catalyzes the cleavage of 5-oxoproline to form L-glutamate coupled to the hydrolysis of ATP to ADP and inorganic phosphate. This Klebsiella pneumoniae subsp. pneumoniae (strain ATCC 700721 / MGH 78578) protein is 5-oxoprolinase subunit A.